Consider the following 234-residue polypeptide: Lipoprotein-releasing system ATP-binding protein LolD 1 (234 aa).

One can recognise an ABC transporter domain in the interval 5 to 231 (IEARGIEKVF…RLTSNVRDPG (227 aa)). 41-48 (GASGSGKS) is a binding site for ATP.

Belongs to the ABC transporter superfamily. Lipoprotein translocase (TC 3.A.1.125) family. As to quaternary structure, the complex is composed of two ATP-binding proteins (LolD) and two transmembrane proteins (LolC and LolE).

Its subcellular location is the cell inner membrane. In terms of biological role, part of the ABC transporter complex LolCDE involved in the translocation of mature outer membrane-directed lipoproteins, from the inner membrane to the periplasmic chaperone, LolA. Responsible for the formation of the LolA-lipoprotein complex in an ATP-dependent manner. The polypeptide is Lipoprotein-releasing system ATP-binding protein LolD 1 (Caulobacter vibrioides (strain ATCC 19089 / CIP 103742 / CB 15) (Caulobacter crescentus)).